The sequence spans 94 residues: MMSTKGITLFLCLLLLALATSVNGGQGTRRSRMTRALHGGRPSARYDAPYCSQEEVRECHDDCSGNPVRDACQCAYDPAGSPACDCYCVEPWRR.

The signal sequence occupies residues 1–24 (MMSTKGITLFLCLLLLALATSVNG). The propeptide occupies 25–44 (GQGTRRSRMTRALHGGRPSA).

In terms of processing, contains 4 disulfide bonds. Expressed by the venom duct.

The protein resides in the secreted. Functionally, probable neurotoxin with unknown target. Possibly targets ion channels. In Californiconus californicus (California cone), this protein is Conotoxin Cal22a.